The primary structure comprises 358 residues: Protein-glutamate methylesterase/protein-glutamine glutaminase 2 (358 aa).

In terms of domain architecture, Response regulatory spans 7–124 (SVLLVDDSAV…KNFLIESAAE (118 aa)). At Asp-58 the chain carries 4-aspartylphosphate. The CheB-type methylesterase domain occupies 170–358 (AQTTERIVAI…QEIHQAILHR (189 aa)). Catalysis depends on residues Ser-182, His-208, and Asp-304.

The protein belongs to the CheB family. Phosphorylated by CheA. Phosphorylation of the N-terminal regulatory domain activates the methylesterase activity.

The protein localises to the cytoplasm. It catalyses the reaction [protein]-L-glutamate 5-O-methyl ester + H2O = L-glutamyl-[protein] + methanol + H(+). The enzyme catalyses L-glutaminyl-[protein] + H2O = L-glutamyl-[protein] + NH4(+). In terms of biological role, involved in chemotaxis. Part of a chemotaxis signal transduction system that modulates chemotaxis in response to various stimuli. Catalyzes the demethylation of specific methylglutamate residues introduced into the chemoreceptors (methyl-accepting chemotaxis proteins or MCP) by CheR. Also mediates the irreversible deamidation of specific glutamine residues to glutamic acid. The chain is Protein-glutamate methylesterase/protein-glutamine glutaminase 2 from Pseudomonas syringae pv. tomato (strain ATCC BAA-871 / DC3000).